We begin with the raw amino-acid sequence, 471 residues long: Argininosuccinate lyase (471 aa).

This sequence belongs to the lyase 1 family. Argininosuccinate lyase subfamily.

It localises to the cytoplasm. It catalyses the reaction 2-(N(omega)-L-arginino)succinate = fumarate + L-arginine. Its pathway is amino-acid biosynthesis; L-arginine biosynthesis; L-arginine from L-ornithine and carbamoyl phosphate: step 3/3. This Renibacterium salmoninarum (strain ATCC 33209 / DSM 20767 / JCM 11484 / NBRC 15589 / NCIMB 2235) protein is Argininosuccinate lyase.